The following is a 33-amino-acid chain: Antimicrobial peptide MBP-1 (33 aa).

As to expression, predominantly in the embryo portion of the kernel.

It is found in the secreted. In terms of biological role, inhibitor of both bacterial and fungal growth in vitro. The polypeptide is Antimicrobial peptide MBP-1 (Zea mays (Maize)).